Consider the following 73-residue polypeptide: Guanine nucleotide-binding protein G(I)/G(S)/G(O) subunit gamma-11 (73 aa).

Residues 54–73 (VKGIPEDKNPFKEKGSCIIS) form a disordered region. C70 carries the cysteine methyl ester modification. C70 carries the S-farnesyl cysteine lipid modification. Positions 71–73 (IIS) are cleaved as a propeptide — removed in mature form.

This sequence belongs to the G protein gamma family. As to quaternary structure, g proteins are composed of 3 units, alpha, beta and gamma. Interacts with beta-1 and beta-3, but not with beta-2.

It localises to the cell membrane. Guanine nucleotide-binding proteins (G proteins) are involved as a modulator or transducer in various transmembrane signaling systems. The beta and gamma chains are required for the GTPase activity, for replacement of GDP by GTP, and for G protein-effector interaction. The polypeptide is Guanine nucleotide-binding protein G(I)/G(S)/G(O) subunit gamma-11 (GNG11) (Bos taurus (Bovine)).